The primary structure comprises 778 residues: Endonuclease MutS2 (778 aa).

328–335 (GPNTGGKT) serves as a coordination point for ATP. Residues 702 to 777 (LDLRGKRYEE…GSGATIVTFK (76 aa)) form the Smr domain.

The protein belongs to the DNA mismatch repair MutS family. MutS2 subfamily. Homodimer. Binds to stalled ribosomes, contacting rRNA.

Its function is as follows. Endonuclease that is involved in the suppression of homologous recombination and thus may have a key role in the control of bacterial genetic diversity. Functionally, acts as a ribosome collision sensor, splitting the ribosome into its 2 subunits. Detects stalled/collided 70S ribosomes which it binds and splits by an ATP-hydrolysis driven conformational change. Acts upstream of the ribosome quality control system (RQC), a ribosome-associated complex that mediates the extraction of incompletely synthesized nascent chains from stalled ribosomes and their subsequent degradation. Probably generates substrates for RQC. The polypeptide is Endonuclease MutS2 (Streptococcus pneumoniae serotype 2 (strain D39 / NCTC 7466)).